An 86-amino-acid polypeptide reads, in one-letter code: Small ribosomal subunit protein bS20 (86 aa).

Residues 1 to 26 (MANIKSAKKRAITSEKRRQHNASRRS) are disordered.

It belongs to the bacterial ribosomal protein bS20 family.

Binds directly to 16S ribosomal RNA. This Photobacterium profundum (strain SS9) protein is Small ribosomal subunit protein bS20.